Here is a 148-residue protein sequence, read N- to C-terminus: Ubiquitin-like protein 4A (148 aa).

In terms of domain architecture, Ubiquitin-like spans 1–76; the sequence is MQLTVKALKG…LNLMVKDQVA (76 aa).

Component of the bag6/bat3 complex.

Its subcellular location is the cytoplasm. The protein resides in the cytosol. It is found in the nucleus. Functionally, as part of a cytosolic protein quality control complex, the bag6/bat3 complex, maintains misfolded and hydrophobic patches-containing proteins in a soluble state and participates in their proper delivery to the endoplasmic reticulum or alternatively can promote their sorting to the proteasome where they undergo degradation. The bag6/bat3 complex is involved in the post-translational delivery of tail-anchored/type II transmembrane proteins to the endoplasmic reticulum membrane. Similarly, the bag6/bat3 complex also functions as a sorting platform for proteins of the secretory pathway that are mislocalized to the cytosol either delivering them to the proteasome for degradation or to the endoplasmic reticulum. The bag6/bat3 complex also plays a role in the endoplasmic reticulum-associated degradation (ERAD), a quality control mechanism that eliminates unwanted proteins of the endoplasmic reticulum through their retrotranslocation to the cytosol and their targeting to the proteasome. It maintains these retrotranslocated proteins in an unfolded yet soluble state condition in the cytosol to ensure their proper delivery to the proteasome. This is Ubiquitin-like protein 4A (ubl4a) from Xenopus laevis (African clawed frog).